The primary structure comprises 55 residues: Ferredoxin (55 aa).

2 consecutive 4Fe-4S ferredoxin-type domains span residues 2–27 and 28–55; these read HIITDECISCGACAAECPVEAIHEGT and GKYEVDADTCIDCGACEAVCPTGAVKAE. [4Fe-4S] cluster-binding residues include Cys-8, Cys-11, Cys-14, Cys-18, Cys-37, Cys-40, Cys-43, and Cys-47.

The cofactor is [4Fe-4S] cluster.

Its function is as follows. Ferredoxins are iron-sulfur proteins that transfer electrons in a wide variety of metabolic reactions. The sequence is that of Ferredoxin from Thermoanaerobacterium thermosaccharolyticum (Clostridium thermosaccharolyticum).